Reading from the N-terminus, the 381-residue chain is Alkanesulfonate monooxygenase (381 aa).

This sequence belongs to the SsuD family. Homotetramer.

The catalysed reaction is an alkanesulfonate + FMNH2 + O2 = an aldehyde + FMN + sulfite + H2O + 2 H(+). In terms of biological role, catalyzes the desulfonation of aliphatic sulfonates. This is Alkanesulfonate monooxygenase from Citrobacter koseri (strain ATCC BAA-895 / CDC 4225-83 / SGSC4696).